The following is a 240-amino-acid chain: MQFSTLVSLAAVIVSTNAAALLTQTVESSTVVTITSCGPEHTNCPASSPATPAPAPSASAPAPPAPEQPEPSAPAPAPSAPAPEQPEQPATPATPAAPATPATPAAPEPSAPAPEQPASPAAPAPAPSAPAPAPEQPEQPAAPTTKEAESTPAPAPSAPAPPAPEQPESAPAPAPSAPAPEQPESSPAPAPSAPASVPEQPASSVSNSTGPSSVPTFEGAAAKQYITGSVAVIAAALLAL.

A signal peptide spans 1-18 (MQFSTLVSLAAVIVSTNA). A disordered region spans residues 41-216 (HTNCPASSPA…NSTGPSSVPT (176 aa)). Over residues 51-86 (TPAPAPSASAPAPPAPEQPEPSAPAPAPSAPAPEQP) the composition is skewed to pro residues. The segment covering 87–103 (EQPATPATPAAPATPAT) has biased composition (low complexity). Pro residues-rich tracts occupy residues 104-137 (PAAP…PEQP) and 153-192 (APAP…PAPS). The span at 193–216 (APASVPEQPASSVSNSTGPSSVPT) shows a compositional bias: low complexity. Asn207 carries N-linked (GlcNAc...) asparagine glycosylation. A lipid anchor (GPI-anchor amidated glycine) is attached at Gly219. The propeptide at 220 to 240 (AAAKQYITGSVAVIAAALLAL) is removed in mature form.

It is found in the cell membrane. The chain is Predicted GPI-anchored protein 58 (PGA58) from Candida albicans (strain SC5314 / ATCC MYA-2876) (Yeast).